The sequence spans 141 residues: Transcription antitermination protein NusB (141 aa).

Belongs to the NusB family.

Involved in transcription antitermination. Required for transcription of ribosomal RNA (rRNA) genes. Binds specifically to the boxA antiterminator sequence of the ribosomal RNA (rrn) operons. In Neisseria meningitidis serogroup A / serotype 4A (strain DSM 15465 / Z2491), this protein is Transcription antitermination protein NusB.